Reading from the N-terminus, the 467-residue chain is 2-succinylbenzoate--CoA ligase (467 aa).

This sequence belongs to the ATP-dependent AMP-binding enzyme family. MenE subfamily.

The enzyme catalyses 2-succinylbenzoate + ATP + CoA = 2-succinylbenzoyl-CoA + AMP + diphosphate. It participates in quinol/quinone metabolism; 1,4-dihydroxy-2-naphthoate biosynthesis; 1,4-dihydroxy-2-naphthoate from chorismate: step 5/7. Its pathway is quinol/quinone metabolism; menaquinone biosynthesis. In terms of biological role, converts 2-succinylbenzoate (OSB) to 2-succinylbenzoyl-CoA (OSB-CoA). The chain is 2-succinylbenzoate--CoA ligase from Listeria monocytogenes serovar 1/2a (strain ATCC BAA-679 / EGD-e).